We begin with the raw amino-acid sequence, 408 residues long: Serine/threonine transporter SstT (408 aa).

Transmembrane regions (helical) follow at residues 11 to 31 (LANG…VSLA), 43 to 63 (FLGS…VFIL), 82 to 102 (IVVL…LLSM), 141 to 161 (ALMT…GLAL), 192 to 212 (IGIF…AIAG), 216 to 236 (LLAV…PLIV), 298 to 318 (MGGA…TLGI), 339 to 359 (ASGV…LFGI), and 363 to 383 (VAMQ…AAET).

It belongs to the dicarboxylate/amino acid:cation symporter (DAACS) (TC 2.A.23) family.

The protein resides in the cell inner membrane. The enzyme catalyses L-serine(in) + Na(+)(in) = L-serine(out) + Na(+)(out). It catalyses the reaction L-threonine(in) + Na(+)(in) = L-threonine(out) + Na(+)(out). In terms of biological role, involved in the import of serine and threonine into the cell, with the concomitant import of sodium (symport system). This Shewanella sp. (strain MR-7) protein is Serine/threonine transporter SstT.